The chain runs to 552 residues: 2,3-bisphosphoglycerate-independent phosphoglycerate mutase (552 aa).

A compositionally biased stretch (polar residues) spans 1-25 (MTNTQQQSESIDDNQAQLSKQQNSD). A disordered region spans residues 1-30 (MTNTQQQSESIDDNQAQLSKQQNSDNNKKV). 2 residues coordinate Mn(2+): Asp-38 and Ser-88. The Phosphoserine intermediate role is filled by Ser-88. Substrate is bound by residues His-149, 179-180 (RD), Arg-217, Arg-223, 293-296 (RADR), and Lys-373. Mn(2+) is bound by residues Asp-440, His-444, Asp-481, His-482, and His-500.

It belongs to the BPG-independent phosphoglycerate mutase family. Monomer. It depends on Mn(2+) as a cofactor.

The catalysed reaction is (2R)-2-phosphoglycerate = (2R)-3-phosphoglycerate. It functions in the pathway carbohydrate degradation; glycolysis; pyruvate from D-glyceraldehyde 3-phosphate: step 3/5. Functionally, catalyzes the interconversion of 2-phosphoglycerate and 3-phosphoglycerate. This chain is 2,3-bisphosphoglycerate-independent phosphoglycerate mutase, found in Psychrobacter arcticus (strain DSM 17307 / VKM B-2377 / 273-4).